Reading from the N-terminus, the 882-residue chain is Valine--tRNA ligase (882 aa).

The 'HIGH' region motif lies at 48-58 (PNVTGKLHLGH). The 'KMSKS' region motif lies at 524–528 (KMSKS). Position 527 (Lys527) interacts with ATP. A coiled-coil region spans residues 809–882 (LAELLDLDEE…KRLAELKAAR (74 aa)). The segment at 844–866 (GFTDRAPEKVVQEERDKQADYEQ) is disordered. Residues 845 to 863 (FTDRAPEKVVQEERDKQAD) are compositionally biased toward basic and acidic residues.

The protein belongs to the class-I aminoacyl-tRNA synthetase family. ValS type 1 subfamily. As to quaternary structure, monomer.

The protein resides in the cytoplasm. The catalysed reaction is tRNA(Val) + L-valine + ATP = L-valyl-tRNA(Val) + AMP + diphosphate. Catalyzes the attachment of valine to tRNA(Val). As ValRS can inadvertently accommodate and process structurally similar amino acids such as threonine, to avoid such errors, it has a 'posttransfer' editing activity that hydrolyzes mischarged Thr-tRNA(Val) in a tRNA-dependent manner. The sequence is that of Valine--tRNA ligase from Latilactobacillus sakei subsp. sakei (strain 23K) (Lactobacillus sakei subsp. sakei).